A 392-amino-acid polypeptide reads, in one-letter code: 23S rRNA (uracil(747)-C(5))-methyltransferase RlmC (392 aa).

The [4Fe-4S] cluster site is built by cysteine 4, cysteine 12, cysteine 15, and cysteine 93. 4 residues coordinate S-adenosyl-L-methionine: glutamine 218, phenylalanine 247, glutamate 275, and asparagine 321. Cysteine 348 functions as the Nucleophile in the catalytic mechanism.

It belongs to the class I-like SAM-binding methyltransferase superfamily. RNA M5U methyltransferase family. RlmC subfamily.

It carries out the reaction uridine(747) in 23S rRNA + S-adenosyl-L-methionine = 5-methyluridine(747) in 23S rRNA + S-adenosyl-L-homocysteine + H(+). Its function is as follows. Catalyzes the formation of 5-methyl-uridine at position 747 (m5U747) in 23S rRNA. The sequence is that of 23S rRNA (uracil(747)-C(5))-methyltransferase RlmC from Haemophilus influenzae (strain PittGG).